A 68-amino-acid polypeptide reads, in one-letter code: Kasstasin (68 aa).

Positions 1 to 20 (MMKKSMLLLFFLGMVSFSLA) are cleaved as a signal peptide. The propeptide occupies 21-44 (DDKREDEGEEKRADEGEEKRAAEE). The segment at 22-41 (DKREDEGEEKRADEGEEKRA) is disordered. K67 carries the post-translational modification Lysine amide.

This sequence belongs to the frog skin active peptide (FSAP) family. Brevinin subfamily. In terms of tissue distribution, expressed by the skin dorsal glands.

The protein localises to the secreted. In terms of biological role, peptide with potent vasoconstrictor properties (EC50=25 pM). Has moderate antimicrobial activity against Gram-positive bacterium S.aureus (MIC=55 uM) and against Gram-negative bacterium E.coli (MIC=110 uM). Not active against fungus C.albicans. Has weak hemolytic activity against horse erythrocytes. This is Kasstasin from Phlyctimantis maculatus (Red-legged running frog).